The sequence spans 226 residues: Lipoprotein-releasing system ATP-binding protein LolD (226 aa).

Residues 6–226 form the ABC transporter domain; the sequence is VLISGLTKTF…KLYKGNLEEV (221 aa). Residue 42–49 participates in ATP binding; sequence GESGSGKS.

Belongs to the ABC transporter superfamily. Lipoprotein translocase (TC 3.A.1.125) family. As to quaternary structure, the complex is composed of two ATP-binding proteins (LolD) and two transmembrane proteins (LolC and LolE).

The protein resides in the cell inner membrane. Part of the ABC transporter complex LolCDE involved in the translocation of mature outer membrane-directed lipoproteins, from the inner membrane to the periplasmic chaperone, LolA. Responsible for the formation of the LolA-lipoprotein complex in an ATP-dependent manner. This is Lipoprotein-releasing system ATP-binding protein LolD from Treponema denticola (strain ATCC 35405 / DSM 14222 / CIP 103919 / JCM 8153 / KCTC 15104).